A 238-amino-acid chain; its full sequence is ATP synthase subunit a (238 aa).

7 helical membrane passes run 35 to 55 (SNVI…TLAT), 61 to 81 (VPSG…SFVV), 94 to 114 (FLCA…VPGL), 128 to 148 (ALTV…AGYI), 151 to 171 (FMGP…ISHL), 190 to 210 (IVLV…MYFL), and 211 to 231 (FSLA…IYLK).

This sequence belongs to the ATPase A chain family. As to quaternary structure, F-type ATPases have 2 components, CF(1) - the catalytic core - and CF(0) - the membrane proton channel. CF(1) has five subunits: alpha(3), beta(3), gamma(1), delta(1), epsilon(1). CF(0) has three main subunits: a(1), b(2) and c(9-12). The alpha and beta chains form an alternating ring which encloses part of the gamma chain. CF(1) is attached to CF(0) by a central stalk formed by the gamma and epsilon chains, while a peripheral stalk is formed by the delta and b chains.

Its subcellular location is the cell inner membrane. Functionally, key component of the proton channel; it plays a direct role in the translocation of protons across the membrane. This is ATP synthase subunit a from Solidesulfovibrio magneticus (strain ATCC 700980 / DSM 13731 / RS-1) (Desulfovibrio magneticus).